The chain runs to 89 residues: Small ribosomal subunit protein uS15 (89 aa).

The protein belongs to the universal ribosomal protein uS15 family. As to quaternary structure, part of the 30S ribosomal subunit. Forms a bridge to the 50S subunit in the 70S ribosome, contacting the 23S rRNA.

One of the primary rRNA binding proteins, it binds directly to 16S rRNA where it helps nucleate assembly of the platform of the 30S subunit by binding and bridging several RNA helices of the 16S rRNA. In terms of biological role, forms an intersubunit bridge (bridge B4) with the 23S rRNA of the 50S subunit in the ribosome. This Arthrobacter sp. (strain FB24) protein is Small ribosomal subunit protein uS15.